An 845-amino-acid chain; its full sequence is Envelope glycoprotein B (845 aa).

The N-terminal stretch at 1 to 41 (MSFTDQTYTRSCMHTCITRDHRLYGIVIISLLLLLDNSVFC) is a signal peptide. At 42–727 (QNENKVIDIK…SGVASFLQNP (686 aa)) the chain is on the virion surface side. 5 cysteine pairs are disulfide-bonded: Cys62-Cys523, Cys80-Cys479, Cys153-Cys218, Cys310-Cys358, and Cys552-Cys591. Positions 120–126 (RYADVFS) are involved in fusion and/or binding to host membrane. A glycan (N-linked (GlcNAc...) asparagine; by host) is linked at Asn175. The involved in fusion and/or binding to host membrane stretch occupies residues 204–212 (LPGTWLRKT). Residues Asn328, Asn388, Asn414, Asn420, Asn425, Asn564, and Asn632 are each glycosylated (N-linked (GlcNAc...) asparagine; by host). A hydrophobic membrane proximal region region spans residues 677–725 (LEQAIVTKPYVPPAGMQQALQGLSGVGSVITGTLGAMQSLVSGVASFLQ). Residues 728–748 (FGGTLSIILIGCIIVGVIIIY) form a helical membrane-spanning segment. The Intravirion portion of the chain corresponds to 749–845 (NRMNQSRGSP…GYTTLSSMNI (97 aa)). Residues 837-840 (YTTL) carry the Internalization motif motif.

The protein belongs to the herpesviridae glycoprotein B family. As to quaternary structure, homotrimer; disulfide-linked. Binds to heparan sulfate proteoglycans. Interacts with gH/gL heterodimer. In terms of processing, a proteolytic cleavage by host furin generates two subunits that remain linked by disulfide bonds.

The protein resides in the virion membrane. It is found in the host cell membrane. The protein localises to the host endosome membrane. It localises to the host Golgi apparatus membrane. Envelope glycoprotein that forms spikes at the surface of virion envelope. Essential for the initial attachment to heparan sulfate moieties of the host cell surface proteoglycans. Involved in fusion of viral and cellular membranes leading to virus entry into the host cell. Following initial binding to its host receptors, membrane fusion is mediated by the fusion machinery composed at least of gB and the heterodimer gH/gL. May be involved in the fusion between the virion envelope and the outer nuclear membrane during virion egress. This is Envelope glycoprotein B from Elephas maximus (Indian elephant).